Here is a 279-residue protein sequence, read N- to C-terminus: Phosphate-binding protein PstS (279 aa).

Positions 1–18 (MKKVIILIFMLSTSLLYN) are cleaved as a signal peptide. A lipid anchor (N-palmitoyl cysteine) is attached at Cys-19. Cys-19 carries the S-diacylglycerol cysteine lipid modification. Phosphate is bound by residues 33–35 (STT), Ser-63, and 151–153 (SGS).

The protein belongs to the PstS family. In terms of assembly, monomer (in vitro). The complex is composed of two ATP-binding proteins (PstB), two transmembrane proteins (PstC and PstA) and a solute-binding protein (PstS).

The protein localises to the cell membrane. Functionally, binds inorganic phosphate with a Kd of 1.2 uM. Part of the ABC transporter complex PstSACB involved in phosphate import. The protein is Phosphate-binding protein PstS of Borreliella burgdorferi (strain ATCC 35210 / DSM 4680 / CIP 102532 / B31) (Borrelia burgdorferi).